Consider the following 333-residue polypeptide: L-lactate dehydrogenase B chain (333 aa).

Residues 29-57 (GQVG…LEDK) and Arg99 contribute to the NAD(+) site. The substrate site is built by Arg106, Asn138, and Arg169. Asn138 is an NAD(+) binding site. His193 serves as the catalytic Proton acceptor. Residue Thr248 coordinates substrate.

This sequence belongs to the LDH/MDH superfamily. LDH family. In terms of assembly, homotetramer.

It localises to the cytoplasm. The enzyme catalyses (S)-lactate + NAD(+) = pyruvate + NADH + H(+). It participates in fermentation; pyruvate fermentation to lactate; (S)-lactate from pyruvate: step 1/1. Its function is as follows. Interconverts simultaneously and stereospecifically pyruvate and lactate with concomitant interconversion of NADH and NAD(+). The protein is L-lactate dehydrogenase B chain (LDHB) of Anas platyrhynchos (Mallard).